A 134-amino-acid chain; its full sequence is Large ribosomal subunit protein eL28 (134 aa).

The residue at position 60 (Ser60) is a Phosphoserine.

The protein belongs to the eukaryotic ribosomal protein eL28 family. In terms of assembly, component of the large ribosomal subunit (LSU). Mature yeast ribosomes consist of a small (40S) and a large (60S) subunit. The 40S small subunit contains 1 molecule of ribosomal RNA (18S rRNA) and at least 33 different proteins. The large 60S subunit contains 3 rRNA molecules (25S, 5.8S and 5S rRNA) and at least 46 different proteins.

It is found in the cytoplasm. Component of the ribosome, a large ribonucleoprotein complex responsible for the synthesis of proteins in the cell. The small ribosomal subunit (SSU) binds messenger RNAs (mRNAs) and translates the encoded message by selecting cognate aminoacyl-transfer RNA (tRNA) molecules. The large subunit (LSU) contains the ribosomal catalytic site termed the peptidyl transferase center (PTC), which catalyzes the formation of peptide bonds, thereby polymerizing the amino acids delivered by tRNAs into a polypeptide chain. The nascent polypeptides leave the ribosome through a tunnel in the LSU and interact with protein factors that function in enzymatic processing, targeting, and the membrane insertion of nascent chains at the exit of the ribosomal tunnel. The polypeptide is Large ribosomal subunit protein eL28 (rpl44) (Schizosaccharomyces pombe (strain 972 / ATCC 24843) (Fission yeast)).